The following is a 255-amino-acid chain: Hydroxyacylglutathione hydrolase (255 aa).

Residues histidine 52, histidine 54, aspartate 56, histidine 57, histidine 108, aspartate 130, and histidine 168 each contribute to the Zn(2+) site.

This sequence belongs to the metallo-beta-lactamase superfamily. Glyoxalase II family. As to quaternary structure, monomer. Zn(2+) is required as a cofactor.

The enzyme catalyses an S-(2-hydroxyacyl)glutathione + H2O = a 2-hydroxy carboxylate + glutathione + H(+). The protein operates within secondary metabolite metabolism; methylglyoxal degradation; (R)-lactate from methylglyoxal: step 2/2. Its function is as follows. Thiolesterase that catalyzes the hydrolysis of S-D-lactoyl-glutathione to form glutathione and D-lactic acid. In Albidiferax ferrireducens (strain ATCC BAA-621 / DSM 15236 / T118) (Rhodoferax ferrireducens), this protein is Hydroxyacylglutathione hydrolase.